An 853-amino-acid chain; its full sequence is Leucine--tRNA ligase (853 aa).

The short motif at 40–50 is the 'HIGH' region element; it reads PYPSGKMHMGH. The short motif at 609 to 613 is the 'KMSKS' region element; sequence KMSKS. Position 612 (Lys612) interacts with ATP.

The protein belongs to the class-I aminoacyl-tRNA synthetase family.

It localises to the cytoplasm. It carries out the reaction tRNA(Leu) + L-leucine + ATP = L-leucyl-tRNA(Leu) + AMP + diphosphate. This is Leucine--tRNA ligase from Brachyspira hyodysenteriae (strain ATCC 49526 / WA1).